Here is a 147-residue protein sequence, read N- to C-terminus: Low molecular weight protein-tyrosine-phosphatase Wzb (147 aa).

Cys9 acts as the Nucleophile in catalysis. Residue Arg15 is part of the active site. Asp115 acts as the Proton donor in catalysis.

Belongs to the low molecular weight phosphotyrosine protein phosphatase family.

It catalyses the reaction O-phospho-L-tyrosyl-[protein] + H2O = L-tyrosyl-[protein] + phosphate. Its pathway is glycan metabolism; exopolysaccharide biosynthesis. Dephosphorylates Wzc. Required for the extracellular polysaccharide colanic acid synthesis. Probably involved in the export of colanic acid from the cell to medium. Involved in protection of cells against contact-dependent growth inhibition (CDI). This Escherichia coli O157:H7 protein is Low molecular weight protein-tyrosine-phosphatase Wzb (wzb).